The sequence spans 360 residues: Protein OSB4, chloroplastic (360 aa).

Residues methionine 1–arginine 61 constitute a chloroplast transit peptide. The segment at serine 28–glutamate 64 is disordered. The span at serine 33–threonine 43 shows a compositional bias: low complexity. The segment covering arginine 51–arginine 61 has biased composition (basic and acidic residues). The SSB domain occupies isoleucine 71–glutamate 188. PDF region regions lie at residues tryptophan 224 to lysine 276 and tryptophan 296 to proline 344.

Its subcellular location is the plastid. It is found in the chloroplast. In terms of biological role, binds single-stranded DNA. The protein is Protein OSB4, chloroplastic (OSB4) of Arabidopsis thaliana (Mouse-ear cress).